The chain runs to 861 residues: Bifunctional uridylyltransferase/uridylyl-removing enzyme (861 aa).

Residues 1–321 (MKNDNRIIKN…VYHQKQKIIR (321 aa)) form a uridylyltransferase region. Residues 322–678 (LDDEFQLSNR…IMPHHSQGGT (357 aa)) form a uridylyl-removing region. The HD domain occupies 440 to 562 (VDQHTLFVIR…LPHARYLDYL (123 aa)). 2 consecutive ACT domains span residues 679-760 (EVFI…AVSR) and 788-861 (QLFL…KSKY).

Belongs to the GlnD family. The cofactor is Mg(2+).

It catalyses the reaction [protein-PII]-L-tyrosine + UTP = [protein-PII]-uridylyl-L-tyrosine + diphosphate. The enzyme catalyses [protein-PII]-uridylyl-L-tyrosine + H2O = [protein-PII]-L-tyrosine + UMP + H(+). Uridylyltransferase (UTase) activity is inhibited by glutamine, while glutamine activates uridylyl-removing (UR) activity. Modifies, by uridylylation and deuridylylation, the PII regulatory proteins (GlnB and homologs), in response to the nitrogen status of the cell that GlnD senses through the glutamine level. Under low glutamine levels, catalyzes the conversion of the PII proteins and UTP to PII-UMP and PPi, while under higher glutamine levels, GlnD hydrolyzes PII-UMP to PII and UMP (deuridylylation). Thus, controls uridylylation state and activity of the PII proteins, and plays an important role in the regulation of nitrogen assimilation and metabolism. This chain is Bifunctional uridylyltransferase/uridylyl-removing enzyme, found in Legionella pneumophila subsp. pneumophila (strain Philadelphia 1 / ATCC 33152 / DSM 7513).